A 696-amino-acid chain; its full sequence is MAIEKYFIPDFVELQRRSFQRFLETGLIEELNKRNPITNSQKDLEILLYPEYYKLAPPRWNSLDAILLSKTYSCRLYVPAQLTNRKTKQIMFKWVQLGDIPLMSKRGHFVVNGAARVIINQIVRGPGLYFSEIQYNVDSSKKTLVRRYAAEFISMRGTWLRLSIDKEKMIWAELKKTPKIPLVWFLLGMGLTEKILFQSLTQPKRLLYNYLDYLKIDNLAIDVKSQNDAFAKRALLRELLLKSKLNSSNIKTLKNSKDFKPLLLVNDIYSEMHSYKEKENRRYPLNSQNGDLADEKEKIPYYANSSLKALELIYSKITNTKKITNLNKKFFAKQGQKWIFKKFMNPRTYDLGLHGRLSLNKKLSLSLPLSQRTLTMYDVLVATEHLLRVEQGLLGTDDIDNLKNRRVRTSSDLIQMQIGIGLLRLEKNIRSKFTTIKGVPKINYFFSTKPLNGALKEFFGTNPLSQFMDMINPLAEMTHKRRLTTLGPGGVSRDTATMDIRGIHPTHYGRICPVETPEGKNAGLVNALTTFARVNPEGLIETPFYKVYKGQVQKKAGFFYLSAEKEEKAIIAAGDLNLSKTGFLPKGLIPVRKFDEFTKVLRNYVDFMSVSPLQMISVATSLVPFLEHDDANRALMGANMQRQAVPLVRSEQAIVGTGIETRIASDSGHVIRAKAGGLVGYVSGQKIRIYTFVSNF.

The protein belongs to the RNA polymerase beta chain family. In terms of assembly, in plastids the minimal PEP RNA polymerase catalytic core is composed of four subunits: alpha, beta, beta', and beta''. When a (nuclear-encoded) sigma factor is associated with the core the holoenzyme is formed, which can initiate transcription.

The protein localises to the plastid. It localises to the chloroplast. The enzyme catalyses RNA(n) + a ribonucleoside 5'-triphosphate = RNA(n+1) + diphosphate. Its function is as follows. DNA-dependent RNA polymerase catalyzes the transcription of DNA into RNA using the four ribonucleoside triphosphates as substrates. The chain is DNA-directed RNA polymerase subunit beta N-terminal section (rpoB1) from Stigeoclonium helveticum (Green alga).